The sequence spans 431 residues: MPTHTRSAELFEKAKKFIPGGVNSPVRAFKSVGGNPIFMAKGQGAYMTDVDGNTYLDYVGSWGPFILGSMHPRITAALEHTLTKIGTSFGTPIEMEIEIAELLTKIVPSIEMVRMVNSGTEATMSAVRLARGCTGRDKIIKFEGCYHGHGDSFLIKAGSGALTLGAPDSPGVTKGTAEDTLNAKYNDIKSVELLVAENKGNIAAIIIEPVAGNTGVIPAKKEFLQALRDLCDREGIVLIFDEVMCGFRVALGGAQELYGITPDLTTMGKIIGGGLPVGAFGGKRSLMENVAPLGGVYQAGTLSGNPLALTAGIETLKILMEENPYPELDRKGAFLEAGFRDNMQKLGLNFVQNRVGSMACLFFTETPVESYDSAITADTEKFGKYFSSMLEQGIYLAPSQFEAMFTSTMHTDADLEKTVKANYVALQAATK.

Lys-269 carries the post-translational modification N6-(pyridoxal phosphate)lysine.

The protein belongs to the class-III pyridoxal-phosphate-dependent aminotransferase family. HemL subfamily. As to quaternary structure, homodimer. Requires pyridoxal 5'-phosphate as cofactor.

It is found in the cytoplasm. The catalysed reaction is (S)-4-amino-5-oxopentanoate = 5-aminolevulinate. The protein operates within porphyrin-containing compound metabolism; protoporphyrin-IX biosynthesis; 5-aminolevulinate from L-glutamyl-tRNA(Glu): step 2/2. It participates in porphyrin-containing compound metabolism; chlorophyll biosynthesis. This is Glutamate-1-semialdehyde 2,1-aminomutase from Chlorobium luteolum (strain DSM 273 / BCRC 81028 / 2530) (Pelodictyon luteolum).